The sequence spans 253 residues: Chloride intracellular channel protein 4 (253 aa).

Residue Ala2 is modified to N-acetylalanine. A required for insertion into the membrane region spans residues 2 to 101; sequence ALSMPLNGLK…EEFLEEVLCP (100 aa). The residue at position 4 (Ser4) is a Phosphoserine. An N6-acetyllysine modification is found at Lys24. Residues 35-38 carry the G-site motif; it reads CPFS. Residues 37-57 traverse the membrane as a helical segment; that stretch reads FSQRLFMILWLKGVVFSVTTV. The GST C-terminal domain maps to 81 to 244; sequence NSEVKTDVNK…PSDKEVEIAY (164 aa). At Lys130 the chain carries N6-acetyllysine. A phosphoserine mark is found at Ser132, Ser167, and Ser236. A Phosphotyrosine modification is found at Tyr244.

This sequence belongs to the chloride channel CLIC family. In terms of assembly, component of a multimeric complex consisting of several cytoskeletal proteins, including actin, ezrin, alpha-actinin, gelsolin, IQGAP1 and CLIC5A. Binds directly to brain dynamin I in a complex containing actin, tubulin and 14-3-3 isoforms. Monomer. Interacts with HRH3. Interacts with AKAP9. Detected in epithelial cells from colon, esophagus and kidney (at protein level). Expression is prominent in heart, kidney, placenta and skeletal muscle.

Its subcellular location is the cytoplasm. It localises to the cytoskeleton. The protein localises to the microtubule organizing center. It is found in the centrosome. The protein resides in the cytoplasmic vesicle membrane. Its subcellular location is the nucleus. It localises to the cell membrane. The protein localises to the mitochondrion. It is found in the cell junction. The protein resides in the endoplasmic reticulum membrane. It carries out the reaction chloride(in) = chloride(out). The catalysed reaction is thiocyanate(in) = thiocyanate(out). It catalyses the reaction nitrate(in) = nitrate(out). The enzyme catalyses iodide(out) = iodide(in). It carries out the reaction bromide(in) = bromide(out). The catalysed reaction is fluoride(in) = fluoride(out). It catalyses the reaction choline(out) = choline(in). Its activity is regulated as follows. Inhibited by rapamycin, amphotericin B and IAA-94. In the soluble state, catalyzes glutaredoxin-like thiol disulfide exchange reactions with reduced glutathione as electron donor. Can insert into membranes and form voltage-dependent multi-ion conductive channels. Membrane insertion seems to be redox-regulated and may occur only under oxidizing conditions. Has alternate cellular functions like a potential role in angiogenesis or in maintaining apical-basolateral membrane polarity during mitosis and cytokinesis. Could also promote endothelial cell proliferation and regulate endothelial morphogenesis (tubulogenesis). Promotes cell-surface expression of HRH3. The protein is Chloride intracellular channel protein 4 of Homo sapiens (Human).